Consider the following 136-residue polypeptide: ATP synthase epsilon chain (136 aa).

It belongs to the ATPase epsilon chain family. In terms of assembly, F-type ATPases have 2 components, CF(1) - the catalytic core - and CF(0) - the membrane proton channel. CF(1) has five subunits: alpha(3), beta(3), gamma(1), delta(1), epsilon(1). CF(0) has three main subunits: a, b and c.

It localises to the cell inner membrane. In terms of biological role, produces ATP from ADP in the presence of a proton gradient across the membrane. The chain is ATP synthase epsilon chain from Afipia carboxidovorans (strain ATCC 49405 / DSM 1227 / KCTC 32145 / OM5) (Oligotropha carboxidovorans).